The sequence spans 417 residues: Probable phosphoglycerate kinase (417 aa).

(2R)-3-phosphoglycerate contacts are provided by valine 23, aspartate 24, phenylalanine 25, asparagine 26, glutamine 38, arginine 39, serine 62, histidine 63, glycine 65, arginine 66, leucine 121, arginine 122, histidine 169, and arginine 170. Glycine 213 serves as a coordination point for ADP. CDP is bound at residue glycine 213. AMP-binding residues include alanine 214 and lysine 215. Alanine 214 lines the ATP pocket. Alanine 214 serves as a coordination point for Mg(2+). Positions 217 and 218 each coordinate Mg(2+). Aspartate 218 is a binding site for CDP. Lysine 219 is an AMP binding site. Residue lysine 219 coordinates ATP. Glycine 237 contributes to the ADP binding site. A CDP-binding site is contributed by glycine 237. The AMP site is built by glycine 238 and glycine 312. ATP-binding residues include glycine 238 and glycine 312. Residues glycine 337, alanine 339, and phenylalanine 342 each contribute to the CDP site. Residue phenylalanine 342 coordinates ADP. Glutamate 343 is an AMP binding site. 3 residues coordinate ATP: glutamate 343, aspartate 374, and threonine 375. Position 374 (aspartate 374) interacts with Mg(2+).

This sequence belongs to the phosphoglycerate kinase family. In terms of assembly, monomer. Mg(2+) is required as a cofactor.

It is found in the cytoplasm. It carries out the reaction (2R)-3-phosphoglycerate + ATP = (2R)-3-phospho-glyceroyl phosphate + ADP. It functions in the pathway carbohydrate degradation; glycolysis; pyruvate from D-glyceraldehyde 3-phosphate: step 2/5. The polypeptide is Probable phosphoglycerate kinase (pgk-1) (Caenorhabditis elegans).